The sequence spans 468 residues: bZIP transcription factor 14 (468 aa).

Disordered stretches follow at residues 55 to 149 and 234 to 272; these read SRRK…EGRA and SPQS…LGKD. Low complexity-rich tracts occupy residues 64–82 and 95–106; these read SFVS…SSGS and VTAASTESVSSS. A compositionally biased stretch (basic and acidic residues) spans 112–128; sequence KKADTDDRVQRSRERNR. In terms of domain architecture, bZIP 1 spans 117 to 165; it reads DDRVQRSRERNRIHARKTRQRKKEQMQSLEGRATDLKHEQIRLKQIINE. The tract at residues 119–139 is basic motif 1; that stretch reads RVQRSRERNRIHARKTRQRKK. A compositionally biased stretch (basic residues) spans 129-138; that stretch reads IHARKTRQRK. Residues 145 to 159 form a leucine-zipper 1 region; that stretch reads LEGRATDLKHEQIRL. Polar residues predominate over residues 247–256; sequence ASTSDVSGDE. The region spanning 279–333 is the bZIP 2 domain; sequence EELDQIRRERNRMHAKRTRDRKRIFTEEMAEMCRILEEENHLLRVHLGGLDSDFK. The interval 285 to 312 is basic motif 2; it reads RRERNRMHAKRTRDRKRIFTEEMAEMCR. A leucine-zipper 2 region spans residues 313–320; it reads ILEEENHL. The segment at 400–468 is disordered; it reads ERQQREAERK…TTSLAAPVGW (69 aa). Positions 401–410 are enriched in basic and acidic residues; it reads RQQREAERKV. Positions 417–426 are enriched in low complexity; that stretch reads SAASDTSTSD.

Belongs to the bZIP family.

It localises to the nucleus. Functionally, transcriptional activator which binds to the C-box-like motif 5'-TGACGT-3' and A-box-like motif 5'-GTACGTA-3' of target promoters to positively regulate the expression of genes involved in the tricarboxylic acid (TCA) cycle in response to nitrogen starvation. May also regulate the TCA cycle during day-to-night transitions. The sequence is that of bZIP transcription factor 14 from Phaeodactylum tricornutum (strain CCAP 1055/1).